The primary structure comprises 138 residues: Large ribosomal subunit protein uL16 (138 aa).

A compositionally biased stretch (basic residues) spans M1–N17. Residues M1 to T22 are disordered.

It belongs to the universal ribosomal protein uL16 family. In terms of assembly, part of the 50S ribosomal subunit.

Its function is as follows. Binds 23S rRNA and is also seen to make contacts with the A and possibly P site tRNAs. In Acidithiobacillus ferrooxidans (strain ATCC 23270 / DSM 14882 / CIP 104768 / NCIMB 8455) (Ferrobacillus ferrooxidans (strain ATCC 23270)), this protein is Large ribosomal subunit protein uL16.